Consider the following 449-residue polypeptide: Heterogeneous nuclear ribonucleoprotein H2 (449 aa).

Methionine 1 bears the N-acetylmethionine mark. Methionine 2 carries the post-translational modification N-acetylmethionine; in Heterogeneous nuclear ribonucleoprotein H2, N-terminally processed. Positions 11–90 (FVVKVRGLPW…RYVEVFKSNS (80 aa)) constitute an RRM 1 domain. Serine 23 bears the Phosphoserine mark. Lysine 35 participates in a covalent cross-link: Glycyl lysine isopeptide (Lys-Gly) (interchain with G-Cter in SUMO2). Phosphoserine is present on residues serine 54 and serine 63. Residue lysine 87 forms a Glycyl lysine isopeptide (Lys-Gly) (interchain with G-Cter in SUMO2) linkage. Serine 90 is subject to Phosphoserine. Lysine 98 participates in a covalent cross-link: Glycyl lysine isopeptide (Lys-Gly) (interchain with G-Cter in SUMO2). The RRM 2 domain maps to 111 to 188 (GFVRLRGLPF…RYIEIFKSSR (78 aa)). Arginine 233 carries the post-translational modification Dimethylated arginine; alternate. An Omega-N-methylarginine; alternate modification is found at arginine 233. The 1-1 repeat unit spans residues 234-249 (GAYGGGYGGYDDYGGY). The interval 234–433 (GAYGGGYGGY…YGGQSSMSGY (200 aa)) is 2 X 16 AA Gly-rich approximate repeats. Tyrosine 246 is subject to Phosphotyrosine. The 76-residue stretch at 289 to 364 (HCVHMRGLPY…RYVELFLNST (76 aa)) folds into the RRM 3 domain. At serine 310 the chain carries Phosphoserine. 3 repeat units span residues 354–372 (HRYVELFLNSTAGTSGGAY), 374–392 (HSYVELFLNSTAGASGGAY), and 418–433 (AGYGGGYGGQSSMSGY). Positions 354–392 (HRYVELFLNSTAGTSGGAYDHSYVELFLNSTAGASGGAY) are 2 X 19 AA perfect repeats.

Component of a ribonucleoprotein complex containing mRNAs and RNA-binding proteins including DDX5, HNRNPH2 and SRSF1 as well as splicing regulator ARVCF. Interacts with TXNL4/DIM1.

The protein resides in the nucleus. The protein localises to the nucleoplasm. Functionally, this protein is a component of the heterogeneous nuclear ribonucleoprotein (hnRNP) complexes which provide the substrate for the processing events that pre-mRNAs undergo before becoming functional, translatable mRNAs in the cytoplasm. Binds poly(RG). In Rattus norvegicus (Rat), this protein is Heterogeneous nuclear ribonucleoprotein H2 (Hnrnph2).